We begin with the raw amino-acid sequence, 345 residues long: tRNA pseudouridine synthase B (345 aa).

D39 acts as the Nucleophile in catalysis.

This sequence belongs to the pseudouridine synthase TruB family. Type 1 subfamily.

It catalyses the reaction uridine(55) in tRNA = pseudouridine(55) in tRNA. In terms of biological role, responsible for synthesis of pseudouridine from uracil-55 in the psi GC loop of transfer RNAs. The protein is tRNA pseudouridine synthase B of Rickettsia rickettsii (strain Iowa).